The chain runs to 166 residues: Putative 4-hydroxy-4-methyl-2-oxoglutarate aldolase 2 (166 aa).

An N-acetylalanine modification is found at alanine 2. Substrate contacts are provided by residues 81-84 (GGNP) and arginine 103. An a divalent metal cation-binding site is contributed by aspartate 104.

This sequence belongs to the class II aldolase/RraA-like family. As to quaternary structure, homotrimer. A divalent metal cation is required as a cofactor.

The catalysed reaction is 4-hydroxy-4-methyl-2-oxoglutarate = 2 pyruvate. The enzyme catalyses oxaloacetate + H(+) = pyruvate + CO2. Catalyzes the aldol cleavage of 4-hydroxy-4-methyl-2-oxoglutarate (HMG) into 2 molecules of pyruvate. Also contains a secondary oxaloacetate (OAA) decarboxylase activity due to the common pyruvate enolate transition state formed following C-C bond cleavage in the retro-aldol and decarboxylation reactions. This Arabidopsis thaliana (Mouse-ear cress) protein is Putative 4-hydroxy-4-methyl-2-oxoglutarate aldolase 2.